The primary structure comprises 135 residues: 6-pyruvoyl tetrahydrobiopterin synthase (135 aa).

H17 lines the Zn(2+) pocket. Catalysis depends on C36, which acts as the Proton acceptor. Residues H40 and H42 each contribute to the Zn(2+) site. Catalysis depends on charge relay system residues H81 and E124.

It belongs to the PTPS family. In terms of assembly, homohexamer formed of two homotrimers in a head to head fashion. Zn(2+) serves as cofactor.

The enzyme catalyses 7,8-dihydroneopterin 3'-triphosphate = 6-pyruvoyl-5,6,7,8-tetrahydropterin + triphosphate + H(+). The protein operates within cofactor biosynthesis; tetrahydrobiopterin biosynthesis; tetrahydrobiopterin from 7,8-dihydroneopterin triphosphate: step 1/3. Its function is as follows. Involved in the biosynthesis of tetrahydrobiopterin, an essential cofactor of aromatic amino acid hydroxylases. Catalyzes the transformation of 7,8-dihydroneopterin triphosphate into 6-pyruvoyl tetrahydropterin. The polypeptide is 6-pyruvoyl tetrahydrobiopterin synthase (ptsA) (Dictyostelium discoideum (Social amoeba)).